The sequence spans 239 residues: ATP synthase subunit a (239 aa).

A run of 5 helical transmembrane segments spans residues isoleucine 13 to phenylalanine 33, phenylalanine 75 to valine 95, aspartate 113 to methionine 133, glycine 174 to glycine 194, and tryptophan 208 to tyrosine 230.

The protein belongs to the ATPase A chain family. As to quaternary structure, F-type ATPases have 2 components, CF(1) - the catalytic core - and CF(0) - the membrane proton channel. CF(1) has five subunits: alpha(3), beta(3), gamma(1), delta(1), epsilon(1). CF(0) has three main subunits: a(1), b(2) and c(9-12). The alpha and beta chains form an alternating ring which encloses part of the gamma chain. CF(1) is attached to CF(0) by a central stalk formed by the gamma and epsilon chains, while a peripheral stalk is formed by the delta and b chains.

Its subcellular location is the cell membrane. Its function is as follows. Key component of the proton channel; it plays a direct role in the translocation of protons across the membrane. The sequence is that of ATP synthase subunit a from Enterococcus faecalis (strain ATCC 700802 / V583).